A 541-amino-acid chain; its full sequence is Glycogen synthase (541 aa).

Lysine 17 contributes to the ADP-alpha-D-glucose binding site. Residues 497–541 (LARPASPPDTAPVGKPARRRRTTALSTTARAHPVARAAGREKIRA) form a disordered region.

This sequence belongs to the glycosyltransferase 1 family. Bacterial/plant glycogen synthase subfamily.

The catalysed reaction is [(1-&gt;4)-alpha-D-glucosyl](n) + ADP-alpha-D-glucose = [(1-&gt;4)-alpha-D-glucosyl](n+1) + ADP + H(+). Its pathway is glycan biosynthesis; glycogen biosynthesis. Its function is as follows. Synthesizes alpha-1,4-glucan chains using ADP-glucose. This chain is Glycogen synthase, found in Ralstonia nicotianae (strain ATCC BAA-1114 / GMI1000) (Ralstonia solanacearum).